A 315-amino-acid chain; its full sequence is Porphobilinogen deaminase (315 aa).

Cys234 is modified (S-(dipyrrolylmethanemethyl)cysteine).

This sequence belongs to the HMBS family. In terms of assembly, monomer. Requires dipyrromethane as cofactor.

It catalyses the reaction 4 porphobilinogen + H2O = hydroxymethylbilane + 4 NH4(+). It participates in porphyrin-containing compound metabolism; protoporphyrin-IX biosynthesis; coproporphyrinogen-III from 5-aminolevulinate: step 2/4. Its function is as follows. Tetrapolymerization of the monopyrrole PBG into the hydroxymethylbilane pre-uroporphyrinogen in several discrete steps. This Mycobacterium avium (strain 104) protein is Porphobilinogen deaminase.